Reading from the N-terminus, the 296-residue chain is MGCRHSRLSSCKPPKKKRQEPEPEQPPRPEPHELGPLNGDTAITVQLCASEEAERHQKDITRILQQHEEEKKKWAQQVEKERELELRDRLDEQQRVLEGKNEEALQVLRASYEQEKEALTHSFREASSTQQETIDRLTSQLEAFQAKMKRVEESILSRNYKKHIQDYGSPSQFWEQELESLHFVIEMKNERIHELDRRLILMETVKEKNLILEEKITTLQQENEDLHVRSRNQVVLSRQLSEDLLLTREALEKEVQLRRQLQQEKEELLYRVLGANASPAFPLAPVTPTEVSFLAT.

The segment covering 1–18 (MGCRHSRLSSCKPPKKKR) has biased composition (basic residues). Positions 1–41 (MGCRHSRLSSCKPPKKKRQEPEPEQPPRPEPHELGPLNGDT) are disordered. The N-myristoyl glycine moiety is linked to residue Gly2. Over residues 19 to 33 (QEPEPEQPPRPEPHE) the composition is skewed to basic and acidic residues. Residues 48 to 272 (CASEEAERHQ…QEKEELLYRV (225 aa)) adopt a coiled-coil conformation. Residues Ser154 and Ser241 each carry the phosphoserine modification.

Belongs to the CCDC69 family. Highly expressed in duodenum, esophagus, pancreas, prostate, salivary gland, thymus and urinary bladder.

The protein localises to the cytoplasm. It is found in the cytoskeleton. It localises to the spindle. Its subcellular location is the midbody. Functionally, may act as a scaffold to regulate the recruitment and assembly of spindle midzone components. Required for the localization of AURKB and PLK1 to the spindle midzone. This is Coiled-coil domain-containing protein 69 from Homo sapiens (Human).